Here is a 369-residue protein sequence, read N- to C-terminus: Serine/threonine-protein kinase srb10 (369 aa).

Positions 5 to 319 constitute a Protein kinase domain; that stretch reads YKIIGFISSG…AKQALEHVFF (315 aa). ATP-binding positions include 11 to 19 and Lys36; that span reads ISSGTYGKV. Catalysis depends on Asp140, which acts as the Proton acceptor.

Belongs to the protein kinase superfamily. CMGC Ser/Thr protein kinase family. CDC2/CDKX subfamily. In terms of assembly, component of the Cdk8 module of the Mediator complex. The Cdk8 module is composed of srb8, srb9, srb10 and srb11. Interacts with med17 and med18.

Its subcellular location is the nucleus. It carries out the reaction L-seryl-[protein] + ATP = O-phospho-L-seryl-[protein] + ADP + H(+). The catalysed reaction is L-threonyl-[protein] + ATP = O-phospho-L-threonyl-[protein] + ADP + H(+). It catalyses the reaction [DNA-directed RNA polymerase] + ATP = phospho-[DNA-directed RNA polymerase] + ADP + H(+). Its function is as follows. Catalytic component of the Cdk8 module/Srb8-11 module which is a regulatory module of the Mediator complex that regulates basal RNA polymerase II transcription. The Cdk8 module may sterically hinder the interaction between Mediator and RNA polymerase II leading to transcriptional repression of a subset of genes regulated by Mediator. In Schizosaccharomyces pombe (strain 972 / ATCC 24843) (Fission yeast), this protein is Serine/threonine-protein kinase srb10 (srb10).